We begin with the raw amino-acid sequence, 31 residues long: Photosystem II reaction center protein T (31 aa).

A helical transmembrane segment spans residues 3 to 23 (ALVYTFLLVGTLGIIFFSIFF).

This sequence belongs to the PsbT family. PSII is composed of 1 copy each of membrane proteins PsbA, PsbB, PsbC, PsbD, PsbE, PsbF, PsbH, PsbI, PsbJ, PsbK, PsbL, PsbM, PsbT, PsbY, PsbZ, Psb30/Ycf12, at least 3 peripheral proteins of the oxygen-evolving complex and a large number of cofactors. It forms dimeric complexes.

Its subcellular location is the plastid. The protein localises to the chloroplast thylakoid membrane. Functionally, found at the monomer-monomer interface of the photosystem II (PS II) dimer, plays a role in assembly and dimerization of PSII. PSII is a light-driven water plastoquinone oxidoreductase, using light energy to abstract electrons from H(2)O, generating a proton gradient subsequently used for ATP formation. This chain is Photosystem II reaction center protein T, found in Tupiella akineta (Green alga).